The chain runs to 276 residues: NH(3)-dependent NAD(+) synthetase (276 aa).

Residue 39–46 (GLSGGVDS) coordinates ATP. Asp-45 contacts Mg(2+). Residue Arg-123 coordinates deamido-NAD(+). Thr-143 is a binding site for ATP. Glu-148 lines the Mg(2+) pocket. Deamido-NAD(+) is bound by residues Lys-156 and Asp-163. ATP is bound by residues Lys-172 and Ser-194. 254-255 (HK) is a deamido-NAD(+) binding site.

This sequence belongs to the NAD synthetase family. As to quaternary structure, homodimer.

The catalysed reaction is deamido-NAD(+) + NH4(+) + ATP = AMP + diphosphate + NAD(+) + H(+). The protein operates within cofactor biosynthesis; NAD(+) biosynthesis; NAD(+) from deamido-NAD(+) (ammonia route): step 1/1. Functionally, catalyzes the ATP-dependent amidation of deamido-NAD to form NAD. Uses ammonia as a nitrogen source. In Hyperthermus butylicus (strain DSM 5456 / JCM 9403 / PLM1-5), this protein is NH(3)-dependent NAD(+) synthetase.